Reading from the N-terminus, the 437-residue chain is Enolase-related protein 1 (437 aa).

Substrate-binding residues include His-160 and Glu-169. The active-site Proton donor is the Glu-212. Mg(2+) is bound by residues Asp-247, Glu-296, and Asp-321. Substrate is bound by residues Glu-296 and Asp-321. Lys-346 functions as the Proton acceptor in the catalytic mechanism. Substrate contacts are provided by residues 373-376 and Lys-397; that span reads SHRS.

Belongs to the enolase family. It depends on Mg(2+) as a cofactor.

It catalyses the reaction (2R)-2-phosphoglycerate = phosphoenolpyruvate + H2O. It functions in the pathway carbohydrate degradation; glycolysis; pyruvate from D-glyceraldehyde 3-phosphate: step 4/5. In Saccharomyces cerevisiae (strain ATCC 204508 / S288c) (Baker's yeast), this protein is Enolase-related protein 1 (ERR1).